The following is a 631-amino-acid chain: Plastidic ATP/ADP-transporter (631 aa).

Transmembrane regions (helical) follow at residues 106-126 (IELV…CILF), 149-169 (IIPF…MLLY), 180-200 (ALFY…GFVL), 238-258 (LFYV…FWGF), 271-290 (FYPL…GRTV), 313-333 (GMMS…WWVN), 369-389 (LATL…TWKS), 407-427 (DFST…QWIF), 442-462 (VLLL…PLAP), 465-485 (AKFG…QNIF), and 543-563 (LASS…AWLG). Residues 586 to 631 (ERASLKIPVVSQNENGNGPLSSESSLNPAGGDSTNASSEPSSPRSL) form a disordered region. A compositionally biased stretch (polar residues) spans 595 to 631 (VSQNENGNGPLSSESSLNPAGGDSTNASSEPSSPRSL).

It belongs to the ADP/ATP translocase tlc (TC 2.A.12.2) family.

It is found in the plastid. Its subcellular location is the chloroplast membrane. The chain is Plastidic ATP/ADP-transporter from Solanum tuberosum (Potato).